Reading from the N-terminus, the 501-residue chain is Protein translocase subunit SecD (501 aa).

6 consecutive transmembrane segments (helical) span residues 9 to 29 (NLWL…YAVV), 339 to 359 (AIEQ…VVLI), 371 to 391 (ISIF…GATL), 394 to 414 (PGIA…VLIF), 447 to 467 (VTLL…VKGF), and 470 to 490 (TLAL…KVFL).

This sequence belongs to the SecD/SecF family. SecD subfamily. As to quaternary structure, forms a complex with SecF. Part of the essential Sec protein translocation apparatus which comprises SecA, SecYEG and auxiliary proteins SecDF. Other proteins may also be involved.

It localises to the cell inner membrane. Functionally, part of the Sec protein translocase complex. Interacts with the SecYEG preprotein conducting channel. SecDF uses the proton motive force (PMF) to complete protein translocation after the ATP-dependent function of SecA. The protein is Protein translocase subunit SecD of Aquifex aeolicus (strain VF5).